The following is a 153-amino-acid chain: D-aminoacyl-tRNA deacylase (153 aa).

A Gly-cisPro motif, important for rejection of L-amino acids motif is present at residues 137 to 138; it reads GP.

It belongs to the DTD family. In terms of assembly, homodimer.

It localises to the cytoplasm. The enzyme catalyses glycyl-tRNA(Ala) + H2O = tRNA(Ala) + glycine + H(+). It catalyses the reaction a D-aminoacyl-tRNA + H2O = a tRNA + a D-alpha-amino acid + H(+). Functionally, an aminoacyl-tRNA editing enzyme that deacylates mischarged D-aminoacyl-tRNAs. Also deacylates mischarged glycyl-tRNA(Ala), protecting cells against glycine mischarging by AlaRS. Acts via tRNA-based rather than protein-based catalysis; rejects L-amino acids rather than detecting D-amino acids in the active site. By recycling D-aminoacyl-tRNA to D-amino acids and free tRNA molecules, this enzyme counteracts the toxicity associated with the formation of D-aminoacyl-tRNA entities in vivo and helps enforce protein L-homochirality. This Dehalococcoides mccartyi (strain ATCC BAA-2266 / KCTC 15142 / 195) (Dehalococcoides ethenogenes (strain 195)) protein is D-aminoacyl-tRNA deacylase.